Consider the following 485-residue polypeptide: NADH-quinone oxidoreductase subunit N (485 aa).

The next 14 helical transmembrane spans lie at 8–28 (LIAL…MLSI), 35–55 (FLNA…LWFV), 75–95 (LYTG…YPWL), 105–125 (FYLL…ANHL), 127–147 (ALFL…GYAF), 159–179 (YTIL…LVYA), 203–223 (LLAG…LVPF), 235–255 (PAPV…GVVM), 271–291 (VVLG…ALSQ), 297–317 (LLGY…IALQ), 326–346 (VGVY…VVSL), 374–394 (AVMT…GFIG), 408–430 (WWLV…RVAV), and 455–475 (IVVL…QPLI).

The protein belongs to the complex I subunit 2 family. As to quaternary structure, NDH-1 is composed of 13 different subunits. Subunits NuoA, H, J, K, L, M, N constitute the membrane sector of the complex.

It is found in the cell inner membrane. It carries out the reaction a quinone + NADH + 5 H(+)(in) = a quinol + NAD(+) + 4 H(+)(out). In terms of biological role, NDH-1 shuttles electrons from NADH, via FMN and iron-sulfur (Fe-S) centers, to quinones in the respiratory chain. The immediate electron acceptor for the enzyme in this species is believed to be ubiquinone. Couples the redox reaction to proton translocation (for every two electrons transferred, four hydrogen ions are translocated across the cytoplasmic membrane), and thus conserves the redox energy in a proton gradient. In Klebsiella pneumoniae subsp. pneumoniae (strain ATCC 700721 / MGH 78578), this protein is NADH-quinone oxidoreductase subunit N.